A 93-amino-acid chain; its full sequence is UPF0728 protein C10orf53 homolog (93 aa).

It belongs to the UPF0728 family.

The chain is UPF0728 protein C10orf53 homolog from Xenopus tropicalis (Western clawed frog).